A 99-amino-acid chain; its full sequence is NADH-quinone oxidoreductase subunit K (99 aa).

Transmembrane regions (helical) follow at residues 3–23, 28–48, and 59–79; these read VTAYVVLSGILFTIGCVGVLI, IVVFMCVELMLNASNLALVAF, and IAAFFVMVVAAAEVVVGLAII.

The protein belongs to the complex I subunit 4L family. NDH-1 is composed of 14 different subunits. Subunits NuoA, H, J, K, L, M, N constitute the membrane sector of the complex.

It localises to the cell membrane. The catalysed reaction is a quinone + NADH + 5 H(+)(in) = a quinol + NAD(+) + 4 H(+)(out). NDH-1 shuttles electrons from NADH, via FMN and iron-sulfur (Fe-S) centers, to quinones in the respiratory chain. The immediate electron acceptor for the enzyme in this species is believed to be a menaquinone. Couples the redox reaction to proton translocation (for every two electrons transferred, four hydrogen ions are translocated across the cytoplasmic membrane), and thus conserves the redox energy in a proton gradient. This is NADH-quinone oxidoreductase subunit K from Nocardioides sp. (strain ATCC BAA-499 / JS614).